Reading from the N-terminus, the 290-residue chain is 4-hydroxy-tetrahydrodipicolinate synthase (290 aa).

Threonine 44 lines the pyruvate pocket. Residue tyrosine 132 is the Proton donor/acceptor of the active site. Residue lysine 160 is the Schiff-base intermediate with substrate of the active site. Isoleucine 202 provides a ligand contact to pyruvate.

This sequence belongs to the DapA family. Homotetramer; dimer of dimers.

It is found in the cytoplasm. The catalysed reaction is L-aspartate 4-semialdehyde + pyruvate = (2S,4S)-4-hydroxy-2,3,4,5-tetrahydrodipicolinate + H2O + H(+). It participates in amino-acid biosynthesis; L-lysine biosynthesis via DAP pathway; (S)-tetrahydrodipicolinate from L-aspartate: step 3/4. Its function is as follows. Catalyzes the condensation of (S)-aspartate-beta-semialdehyde [(S)-ASA] and pyruvate to 4-hydroxy-tetrahydrodipicolinate (HTPA). This is 4-hydroxy-tetrahydrodipicolinate synthase from Geotalea uraniireducens (strain Rf4) (Geobacter uraniireducens).